A 370-amino-acid polypeptide reads, in one-letter code: Cytochrome b (370 aa).

Helical transmembrane passes span 25–45 (FGSM…FLAV), 69–90 (WMMQ…YIHI), 105–125 (WLSG…GYVL), and 170–190 (FFAL…LHIL). Residues His75 and His89 each contribute to the heme b site. Heme b contacts are provided by His174 and His188. His193 is a binding site for a ubiquinone. Transmembrane regions (helical) follow at residues 218–238 (YKDM…VSFF), 280–300 (LGGA…PFTH), 312–332 (FMQL…WTAT), and 339–358 (FTTI…ISNP).

Belongs to the cytochrome b family. The cytochrome bc1 complex contains 3 respiratory subunits (MT-CYB, CYC1 and UQCRFS1), 2 core proteins (UQCRC1 and UQCRC2) and probably 6 low-molecular weight proteins. Requires heme b as cofactor.

It localises to the mitochondrion inner membrane. In terms of biological role, component of the ubiquinol-cytochrome c reductase complex (complex III or cytochrome b-c1 complex) that is part of the mitochondrial respiratory chain. The b-c1 complex mediates electron transfer from ubiquinol to cytochrome c. Contributes to the generation of a proton gradient across the mitochondrial membrane that is then used for ATP synthesis. This chain is Cytochrome b (MT-CYB), found in Chilabothrus strigilatus fosteri (Bimini Island boa constrictor).